We begin with the raw amino-acid sequence, 244 residues long: Myrosinase MB1 (244 aa).

The N-linked (GlcNAc...) asparagine glycan is linked to Asn-32. Tyr-51 contributes to the substrate binding site. Glu-125 acts as the Nucleophile in catalysis. Substrate contacts are provided by residues Trp-173 and 180–181 (EF). N-linked (GlcNAc...) asparagine glycosylation is present at Asn-216.

The protein belongs to the glycosyl hydrolase 1 family. Homodimer. In vacuoles called myrosin grains of a certain class of cells, myrosin cells, distributed in the cotyledons and the axis of the embryo as well as in different organs of the growing plant.

It is found in the vacuole. The enzyme catalyses a thioglucoside + H2O = a sugar + a thiol.. In terms of biological role, degradation of glucosinolates (glucose residue linked by a thioglucoside bound to an amino acid derivative) to glucose, sulfate and any of the products: thiocyanates, isothiocyanates, nitriles, epithionitriles or oxazolidine-2-thiones. The chain is Myrosinase MB1 from Sinapis alba (White mustard).